The sequence spans 346 residues: D-amino-acid oxidase (346 aa).

Positions 22, 24, 52, 53, 54, 58, 59, 60, and 187 each coordinate FAD. Residues Tyr227 and Arg284 each coordinate D-proline. Residues Tyr227 and Arg284 each coordinate D-serine. FAD contacts are provided by Arg284, Gly311, Gly312, Gly314, and Thr316. Arg284 contacts D-dopa. Gly312 lines the D-proline pocket. Gly312 is a binding site for D-serine. Position 312 (Gly312) interacts with D-dopa. The short motif at 344–346 (SKL) is the Microbody targeting signal element.

Belongs to the DAMOX/DASOX family. Requires FAD as cofactor.

The protein resides in the peroxisome matrix. The catalysed reaction is a D-alpha-amino acid + O2 + H2O = a 2-oxocarboxylate + H2O2 + NH4(+). It catalyses the reaction D-serine + O2 + H2O = 3-hydroxypyruvate + H2O2 + NH4(+). It carries out the reaction D-phenylalanine + O2 + H2O = 3-phenylpyruvate + H2O2 + NH4(+). The enzyme catalyses D-alanine + O2 + H2O = pyruvate + H2O2 + NH4(+). The catalysed reaction is D-arginine + O2 + H2O = 5-guanidino-2-oxopentanoate + H2O2 + NH4(+). It catalyses the reaction D-methionine + O2 + H2O = 4-methylsulfanyl-2-oxobutanoate + H2O2 + NH4(+). It carries out the reaction D-ornithine + O2 + H2O = 5-amino-2-oxopentanoate + H2O2 + NH4(+). The enzyme catalyses D-leucine + O2 + H2O = 4-methyl-2-oxopentanoate + H2O2 + NH4(+). The catalysed reaction is D-lysine + O2 + H2O = 6-amino-2-oxohexanoate + H2O2 + NH4(+). It catalyses the reaction D-proline + O2 = 1-pyrroline-2-carboxylate + H2O2. It carries out the reaction D-valine + O2 + H2O = 3-methyl-2-oxobutanoate + H2O2 + NH4(+). The enzyme catalyses D-histidine + O2 + H2O = 3-(imidazol-5-yl)pyruvate + H2O2 + NH4(+). Functionally, catalyzes the oxidative deamination of D-amino acids with broad substrate specificity. Has low in vitro and no in vivo activity on D-serine; primary D-serine degradation is performed by the D-serine dehydratase dsd. The polypeptide is D-amino-acid oxidase (ddo-1) (Dictyostelium discoideum (Social amoeba)).